A 346-amino-acid chain; its full sequence is Biotin synthase (346 aa).

The 219-residue stretch at 38-256 (RQVQVSTLLS…IAVARIMMPT (219 aa)) folds into the Radical SAM core domain. [4Fe-4S] cluster is bound by residues C53, C57, and C60. Residues C97, C128, C188, and R260 each contribute to the [2Fe-2S] cluster site.

This sequence belongs to the radical SAM superfamily. Biotin synthase family. As to quaternary structure, homodimer. Requires [4Fe-4S] cluster as cofactor. It depends on [2Fe-2S] cluster as a cofactor.

The catalysed reaction is (4R,5S)-dethiobiotin + (sulfur carrier)-SH + 2 reduced [2Fe-2S]-[ferredoxin] + 2 S-adenosyl-L-methionine = (sulfur carrier)-H + biotin + 2 5'-deoxyadenosine + 2 L-methionine + 2 oxidized [2Fe-2S]-[ferredoxin]. It participates in cofactor biosynthesis; biotin biosynthesis; biotin from 7,8-diaminononanoate: step 2/2. Catalyzes the conversion of dethiobiotin (DTB) to biotin by the insertion of a sulfur atom into dethiobiotin via a radical-based mechanism. In Escherichia coli (strain SE11), this protein is Biotin synthase.